The primary structure comprises 418 residues: Exodeoxyribonuclease 7 large subunit (418 aa).

It belongs to the XseA family. Heterooligomer composed of large and small subunits.

The protein resides in the cytoplasm. It carries out the reaction Exonucleolytic cleavage in either 5'- to 3'- or 3'- to 5'-direction to yield nucleoside 5'-phosphates.. Functionally, bidirectionally degrades single-stranded DNA into large acid-insoluble oligonucleotides, which are then degraded further into small acid-soluble oligonucleotides. The protein is Exodeoxyribonuclease 7 large subunit of Acaryochloris marina (strain MBIC 11017).